We begin with the raw amino-acid sequence, 305 residues long: Ribonuclease Z (305 aa).

Residues His61, His63, Asp65, His66, His141, Asp209, and His268 each contribute to the Zn(2+) site. Asp65 functions as the Proton acceptor in the catalytic mechanism.

The protein belongs to the RNase Z family. As to quaternary structure, homodimer. Zn(2+) serves as cofactor.

It catalyses the reaction Endonucleolytic cleavage of RNA, removing extra 3' nucleotides from tRNA precursor, generating 3' termini of tRNAs. A 3'-hydroxy group is left at the tRNA terminus and a 5'-phosphoryl group is left at the trailer molecule.. Its function is as follows. Zinc phosphodiesterase, which displays some tRNA 3'-processing endonuclease activity. Probably involved in tRNA maturation, by removing a 3'-trailer from precursor tRNA. The protein is Ribonuclease Z of Clostridioides difficile (strain 630) (Peptoclostridium difficile).